The chain runs to 396 residues: Probable isocitrate dehydrogenase [NAD] gamma 2, mitochondrial (396 aa).

A mitochondrion-targeting transit peptide spans 1 to 25 (MLAVTSCSMKTVLQYAVFLGHSREV). Citrate is bound at residue Thr-117. 3 residues coordinate substrate: Arg-133, Arg-164, and Asp-251. Mn(2+) is bound at residue Asp-251. Position 321 (Asn-321) interacts with ADP.

This sequence belongs to the isocitrate and isopropylmalate dehydrogenases family. Heterooligomer of subunits alpha (IDH3A), beta (IDH3B), and gamma (IDH3G) in the apparent ratio of 2:1:1. The heterodimer containing one IDH3A and one IDH3B subunit and the heterodimer containing one IDH3A and one IDH3G subunit assemble into a heterotetramer (which contains two subunits of IDH3A, one of IDH3B and one of IDH3G) and further into the heterooctamer. Mg(2+) serves as cofactor. The cofactor is Mn(2+).

It is found in the mitochondrion. With respect to regulation, the heterotetramer and the heterodimer composed of IDH3A and IDH3G subunits can be allosterically activated by citrate (CIT) or/and ADP, and the two activators can act independently or synergistically. The heterodimer composed of IDH3A and IDH3B subunits cannot be allosterically regulated and the allosteric regulation of the heterotetramer is through the IDH3G subunit and not the IDH3B subunit. The IDH3G subunit contains the allosteric site which consists of a CIT-binding site and an ADP-binding site, and the binding of CIT and ADP causes conformational changes at the allosteric site which are transmitted to the active site in the catalytic subunit (IDH3A) through a cascade of conformational changes at the heterodimer interface, leading to stabilization of the isocitrate-binding at the active site and thus activation of the enzyme. ATP can activate the heterotetramer and the heterodimer composed of IDH3A and IDH3G subunits at low concentrations but inhibits their activities at high concentrations, whereas ATP exhibits only inhibitory effect on the heterodimer composed of IDH3A and IDH3B subunits. Functionally, regulatory subunit which plays a role in the allosteric regulation of the enzyme catalyzing the decarboxylation of isocitrate (ICT) into alpha-ketoglutarate. The heterodimer composed of the alpha (IDH3A) and beta (IDH3B) subunits and the heterodimer composed of the alpha (IDH3A) and gamma (IDH3G) subunits, have considerable basal activity but the full activity of the heterotetramer (containing two subunits of IDH3A, one of IDH3B and one of IDH3G) requires the assembly and cooperative function of both heterodimers. This Mus musculus (Mouse) protein is Probable isocitrate dehydrogenase [NAD] gamma 2, mitochondrial.